The chain runs to 314 residues: Olfactory receptor 10T2 (314 aa).

Residues 1 to 26 are Extracellular-facing; that stretch reads MRGFNKTTVVTQFILVGFSSLGELQL. N5 carries an N-linked (GlcNAc...) asparagine glycan. The chain crosses the membrane as a helical span at residues 27-47; sequence LLFVIFLLLYLTILVANVTIM. Over 48 to 55 the chain is Cytoplasmic; the sequence is AVIRFSWT. The chain crosses the membrane as a helical span at residues 56–76; the sequence is LHTPMYGFLFILSFSESCYTF. The Extracellular segment spans residues 77 to 100; sequence VIIPQLLVHLLSDTKTISFMACAT. C98 and C190 are oxidised to a cystine. A helical transmembrane segment spans residues 101–121; sequence QLFFFLGFACTNCLLIAVMGY. Over 122-140 the chain is Cytoplasmic; it reads DRYVAICHPLRYTLIINKR. A helical membrane pass occupies residues 141–161; sequence LGLELISLSGATGFFIALVAT. Over 162 to 198 the chain is Extracellular; it reads NLICDMRFCGPNRVNHYFCDMAPVIKLACTDTHVKEL. Residues 199 to 218 traverse the membrane as a helical segment; sequence ALFSLSILVIMVPFLLILIS. At 219–237 the chain is on the cytoplasmic side; sequence YGFIVNTILKIPSAEGKKA. Residues 238-258 form a helical membrane-spanning segment; it reads FVTCASHLTVVFVHYGCASII. At 259–271 the chain is on the extracellular side; that stretch reads YLRPKSKSASDKD. A helical transmembrane segment spans residues 272–292; the sequence is QLVAVTYTVVTPLLNPLVYSL. Topologically, residues 293–314 are cytoplasmic; it reads RNKEVKTALKRVLGMPVATKMS.

Belongs to the G-protein coupled receptor 1 family.

The protein localises to the cell membrane. Its function is as follows. Odorant receptor. The sequence is that of Olfactory receptor 10T2 (OR10T2) from Homo sapiens (Human).